A 1249-amino-acid polypeptide reads, in one-letter code: Hyphally regulated cell wall protein 3 (1249 aa).

A signal peptide spans 1–20 (MHLFKRIALTLWLIISSTLA). N373 carries an N-linked (GlcNAc...) asparagine glycan. Positions 383-415 (FPTTSQSSSSETVASSSQPDSSSTEPSAFPSST) are enriched in low complexity. Disordered stretches follow at residues 383-729 (FPTT…SGII) and 883-1217 (GLST…SSAS). The span at 416 to 428 (GDSSAEPSITSDY) shows a compositional bias: polar residues. Residues 429–716 (SSSELSVVPS…SEYTATWTTT (288 aa)) show a composition bias toward low complexity. N681 carries an N-linked (GlcNAc...) asparagine glycan. 2 stretches are compositionally biased toward polar residues: residues 717–729 (NSDG…SGII) and 883–935 (GLST…PVPT). N891, N940, N944, N948, N952, N956, N960, N966, N970, N974, N984, N988, N992, N996, N1000, N1010, N1014, N1018, N1022, N1026, N1032, N1046, N1050, N1058, N1062, N1072, N1076, N1080, N1086, N1090, N1094, N1098, N1114, N1118, N1122, N1128, N1132, N1136, N1140, N1150, N1154, N1158, N1172, N1180, and N1186 each carry an N-linked (GlcNAc...) asparagine glycan. Positions 941-959 (GSNNGSDNGSNNGSNNGSN) are enriched in low complexity. The segment covering 960 to 982 (NGSGSGNGSNNGSNNGSGSGNGF) has biased composition (gly residues). Low complexity predominate over residues 983–1043 (NNGSDNGSNN…SNSGSDSGNG (61 aa)). Gly residues predominate over residues 1062–1078 (NGSGSGGESNNGSGNGS). Low complexity predominate over residues 1079–1097 (DNGSSPDNGSNNGSNNGSN). Residues 1139–1167 (NNGSNSGSNSDNGSNNSSGNGSSSDLGSV) show a composition bias toward low complexity. Composition is skewed to low complexity over residues 1175-1194 (NEGS…GAGA) and 1205-1217 (SPSA…SSAS). N1225 carries an N-linked (GlcNAc...) asparagine glycan. N1225 carries GPI-anchor amidated asparagine lipidation. Residues 1226-1249 (GSGKLLNGKVLTLSVLSSMVVVFL) constitute a propeptide, removed in mature form.

This sequence belongs to the HYR1/IFF family. In terms of processing, the GPI-anchor is attached to the protein in the endoplasmic reticulum and serves to target the protein to the cell surface. There, the glucosamine-inositol phospholipid moiety is cleaved off and the GPI-modified mannoprotein is covalently attached via its lipidless GPI glycan remnant to the 1,6-beta-glucan of the outer cell wall layer.

Its subcellular location is the secreted. The protein localises to the cell wall. The protein resides in the membrane. In terms of biological role, GPI-anchored cell wall protein involved in cell wall organization, hyphal growth, as well as in host-fungal interaction and virulence. The sequence is that of Hyphally regulated cell wall protein 3 (HYR3) from Candida albicans (strain SC5314 / ATCC MYA-2876) (Yeast).